The sequence spans 433 residues: ATP-dependent protease ATPase subunit HslU (433 aa).

ATP contacts are provided by residues Ile-18, 60-65 (GVGKTE), Asp-246, Glu-311, and Arg-383.

Belongs to the ClpX chaperone family. HslU subfamily. A double ring-shaped homohexamer of HslV is capped on each side by a ring-shaped HslU homohexamer. The assembly of the HslU/HslV complex is dependent on binding of ATP.

It is found in the cytoplasm. In terms of biological role, ATPase subunit of a proteasome-like degradation complex; this subunit has chaperone activity. The binding of ATP and its subsequent hydrolysis by HslU are essential for unfolding of protein substrates subsequently hydrolyzed by HslV. HslU recognizes the N-terminal part of its protein substrates and unfolds these before they are guided to HslV for hydrolysis. The sequence is that of ATP-dependent protease ATPase subunit HslU from Cereibacter sphaeroides (strain ATCC 17025 / ATH 2.4.3) (Rhodobacter sphaeroides).